The chain runs to 645 residues: Cytoplasmic dynein 1 intermediate chain 1 (645 aa).

Composition is skewed to basic and acidic residues over residues 1 to 13 (MSDK…ELER) and 20 to 58 (QIRE…KRRE). Disordered stretches follow at residues 1–58 (MSDK…KRRE) and 96–125 (MSPS…RTLQ). At Ser2 the chain carries N-acetylserine. The interval 2–123 (SDKSDLKAEL…SGDLGPLTRT (122 aa)) is interaction with DCTN1. 2 positions are modified to phosphoserine: Ser50 and Ser100. Low complexity predominate over residues 96–107 (MSPSSKSVSTPS). Thr105 carries the post-translational modification Phosphothreonine. Ser107, Ser111, and Ser114 each carry phosphoserine. The interaction with DYNLT1 stretch occupies residues 147-163 (KLGVSKVTQVDFLPREV). The segment at 169 to 221 (ETQTPLATHQSEEDEEDEEMVESKVGQDSELENQDKKQEVKEAPPRELTEEEK) is disordered. Thr176 bears the Phosphothreonine mark. Phosphoserine is present on residues Ser179 and Ser197. Residues 189–221 (VESKVGQDSELENQDKKQEVKEAPPRELTEEEK) are compositionally biased toward basic and acidic residues. 7 WD repeats span residues 285-334 (SKHR…TTPE), 338-378 (HCQS…RTPV), 387-428 (AHTH…TPQE), 437-477 (SKPV…AGIG), 482-527 (GHQG…PLYS), 530-570 (DNAD…EVPT), and 576-615 (EGAS…VPHN). At Ser635 the chain carries Phosphoserine.

Belongs to the dynein intermediate chain family. Homodimer. The cytoplasmic dynein 1 complex consists of two catalytic heavy chains (HCs) and a number of non-catalytic subunits presented by intermediate chains (ICs), light intermediate chains (LICs) and light chains (LCs); the composition seems to vary in respect to the IC, LIC and LC composition. The heavy chain homodimer serves as a scaffold for the probable homodimeric assembly of the respective non-catalytic subunits. The ICs and LICs bind directly to the HC dimer and the LCs assemble on the IC dimer. Interacts with DYNC1H1. Interacts with DYNLT1 and DYNLT3. Interacts with DCTN1. Interacts with MCRS1; the interaction is required for the proper distribution of centriolar satellites.

It is found in the cytoplasm. Its subcellular location is the chromosome. The protein resides in the centromere. It localises to the kinetochore. The protein localises to the cytoskeleton. It is found in the spindle pole. Functionally, acts as one of several non-catalytic accessory components of the cytoplasmic dynein 1 complex that are thought to be involved in linking dynein to cargos and to adapter proteins that regulate dynein function. Cytoplasmic dynein 1 acts as a motor for the intracellular retrograde motility of vesicles and organelles along microtubules. The intermediate chains mediate the binding of dynein to dynactin via its 150 kDa component (p150-glued) DCTN1. May play a role in mediating the interaction of cytoplasmic dynein with membranous organelles and kinetochores. The protein is Cytoplasmic dynein 1 intermediate chain 1 (DYNC1I1) of Homo sapiens (Human).